A 306-amino-acid polypeptide reads, in one-letter code: Curved DNA-binding protein (306 aa).

The 65-residue stretch at 5-69 folds into the J domain; that stretch reads DYYAIMGVKP…QRRAEYDQLW (65 aa).

It localises to the cytoplasm. The protein localises to the nucleoid. In terms of biological role, DNA-binding protein that preferentially recognizes a curved DNA sequence. It is probably a functional analog of DnaJ; displays overlapping activities with DnaJ, but functions under different conditions, probably acting as a molecular chaperone in an adaptive response to environmental stresses other than heat shock. Lacks autonomous chaperone activity; binds native substrates and targets them for recognition by DnaK. Its activity is inhibited by the binding of CbpM. This chain is Curved DNA-binding protein, found in Salmonella paratyphi A (strain ATCC 9150 / SARB42).